A 394-amino-acid polypeptide reads, in one-letter code: Isopentenyl-diphosphate delta-isomerase (394 aa).

Position 10 to 11 (10 to 11 (RK)) interacts with substrate. Residues Thr-67, 68–70 (GMT), Ser-101, and Asn-129 each bind FMN. 101-103 (SQR) is a substrate binding site. Gln-168 contributes to the substrate binding site. Residue Glu-169 coordinates Mg(2+). Residues Lys-200, Ser-225, Thr-230, 279–281 (GMR), and 300–301 (AL) contribute to the FMN site.

This sequence belongs to the IPP isomerase type 2 family. Homooctamer. Dimer of tetramers. It depends on FMN as a cofactor. NADPH is required as a cofactor. Requires Mg(2+) as cofactor.

The protein localises to the cytoplasm. The catalysed reaction is isopentenyl diphosphate = dimethylallyl diphosphate. In terms of biological role, involved in the biosynthesis of isoprenoids. Catalyzes the 1,3-allylic rearrangement of the homoallylic substrate isopentenyl (IPP) to its allylic isomer, dimethylallyl diphosphate (DMAPP). In Pyrococcus furiosus (strain ATCC 43587 / DSM 3638 / JCM 8422 / Vc1), this protein is Isopentenyl-diphosphate delta-isomerase.